We begin with the raw amino-acid sequence, 311 residues long: Pyrimidine-specific ribonucleoside hydrolase RihA (311 aa).

His-240 is an active-site residue.

This sequence belongs to the IUNH family. RihA subfamily.

Functionally, hydrolyzes with equal efficiency cytidine or uridine to ribose and cytosine or uracil, respectively. In Escherichia coli O17:K52:H18 (strain UMN026 / ExPEC), this protein is Pyrimidine-specific ribonucleoside hydrolase RihA.